A 343-amino-acid chain; its full sequence is N-acetyl-gamma-glutamyl-phosphate reductase (343 aa).

The active site involves Cys150.

The protein belongs to the NAGSA dehydrogenase family. Type 1 subfamily.

It localises to the cytoplasm. It catalyses the reaction N-acetyl-L-glutamate 5-semialdehyde + phosphate + NADP(+) = N-acetyl-L-glutamyl 5-phosphate + NADPH + H(+). The protein operates within amino-acid biosynthesis; L-arginine biosynthesis; N(2)-acetyl-L-ornithine from L-glutamate: step 3/4. Its function is as follows. Catalyzes the NADPH-dependent reduction of N-acetyl-5-glutamyl phosphate to yield N-acetyl-L-glutamate 5-semialdehyde. In Nitrosococcus oceani (strain ATCC 19707 / BCRC 17464 / JCM 30415 / NCIMB 11848 / C-107), this protein is N-acetyl-gamma-glutamyl-phosphate reductase.